The sequence spans 147 residues: Heavy metal-associated isoprenylated plant protein 27 (147 aa).

Positions Phe-18–Glu-82 constitute an HMA domain. Positions 29 and 32 each coordinate a metal cation. Cys-144 carries the cysteine methyl ester modification. The S-farnesyl cysteine moiety is linked to residue Cys-144. A propeptide spans Thr-145–Met-147 (removed in mature form).

It belongs to the HIPP family. As to quaternary structure, interacts with UBP16. Interacts with ZHD11/HB29.

The protein resides in the membrane. Its function is as follows. Heavy-metal-binding protein. Binds cadmium. May be involved in cadmium transport and play a role in cadmium detoxification. The sequence is that of Heavy metal-associated isoprenylated plant protein 27 from Arabidopsis thaliana (Mouse-ear cress).